The sequence spans 253 residues: Phosphoglycerate mutase 2 (253 aa).

Phosphothreonine is present on Thr3. Substrate is bound by residues 10-17, 23-24, Arg62, 89-92, Lys100, and 116-117; these read RHGESLWN, CG, ERHY, and RR. His11 (tele-phosphohistidine intermediate) is an active-site residue. Ser14 bears the Phosphoserine mark. The active-site Proton donor/acceptor is Glu89. Ser118 carries the post-translational modification Phosphoserine. Thr121 is subject to Phosphothreonine. Phosphotyrosine occurs at positions 132 and 133. At Ser135 the chain carries Phosphoserine. The residue at position 152 (Thr152) is a Phosphothreonine. 187-188 provides a ligand contact to substrate; the sequence is GN.

Belongs to the phosphoglycerate mutase family. BPG-dependent PGAM subfamily. In terms of assembly, homodimer. Interacts with ENO1. In terms of tissue distribution, expressed in the testes (at protein level).

The catalysed reaction is (2R)-2-phosphoglycerate = (2R)-3-phosphoglycerate. It catalyses the reaction (2R)-3-phospho-glyceroyl phosphate = (2R)-2,3-bisphosphoglycerate + H(+). In terms of biological role, interconversion of 3- and 2-phosphoglycerate with 2,3-bisphosphoglycerate as the primer of the reaction. Can also catalyze the reaction of EC 5.4.2.4 (synthase), but with a reduced activity. The sequence is that of Phosphoglycerate mutase 2 (Pgam2) from Mus musculus (Mouse).